The primary structure comprises 344 residues: Holliday junction branch migration complex subunit RuvB (344 aa).

Residues 4–194 (CLLRFCYNSL…FGITGHMEYY (191 aa)) form a large ATPase domain (RuvB-L) region. ATP contacts are provided by residues L33, R34, G75, K78, T79, T80, 141-143 (EDF), R184, Y194, and R231. T79 contacts Mg(2+). Positions 195–265 (TDIDLTEIVE…ITDKALTMLD (71 aa)) are small ATPAse domain (RuvB-S). Positions 268–344 (HEGLDYVDQK…YEHLGYRYTE (77 aa)) are head domain (RuvB-H). DNA-binding residues include R304, R323, R325, and R328.

The protein belongs to the RuvB family. As to quaternary structure, homohexamer. Forms an RuvA(8)-RuvB(12)-Holliday junction (HJ) complex. HJ DNA is sandwiched between 2 RuvA tetramers; dsDNA enters through RuvA and exits via RuvB. An RuvB hexamer assembles on each DNA strand where it exits the tetramer. Each RuvB hexamer is contacted by two RuvA subunits (via domain III) on 2 adjacent RuvB subunits; this complex drives branch migration. In the full resolvosome a probable DNA-RuvA(4)-RuvB(12)-RuvC(2) complex forms which resolves the HJ.

It localises to the cytoplasm. The catalysed reaction is ATP + H2O = ADP + phosphate + H(+). The RuvA-RuvB-RuvC complex processes Holliday junction (HJ) DNA during genetic recombination and DNA repair, while the RuvA-RuvB complex plays an important role in the rescue of blocked DNA replication forks via replication fork reversal (RFR). RuvA specifically binds to HJ cruciform DNA, conferring on it an open structure. The RuvB hexamer acts as an ATP-dependent pump, pulling dsDNA into and through the RuvAB complex. RuvB forms 2 homohexamers on either side of HJ DNA bound by 1 or 2 RuvA tetramers; 4 subunits per hexamer contact DNA at a time. Coordinated motions by a converter formed by DNA-disengaged RuvB subunits stimulates ATP hydrolysis and nucleotide exchange. Immobilization of the converter enables RuvB to convert the ATP-contained energy into a lever motion, pulling 2 nucleotides of DNA out of the RuvA tetramer per ATP hydrolyzed, thus driving DNA branch migration. The RuvB motors rotate together with the DNA substrate, which together with the progressing nucleotide cycle form the mechanistic basis for DNA recombination by continuous HJ branch migration. Branch migration allows RuvC to scan DNA until it finds its consensus sequence, where it cleaves and resolves cruciform DNA. The polypeptide is Holliday junction branch migration complex subunit RuvB (Streptococcus mutans serotype c (strain ATCC 700610 / UA159)).